The chain runs to 1651 residues: Alsin (1651 aa).

RCC1 repeat units lie at residues 59–108, 109–167, and 169–218; these read DGEV…AVTE, SGVV…ALSI, and REIW…ALVQ. The interval 444-476 is disordered; it reads REEQVKQESLQGKKSSSLMDIREEESEGGSRRL. Residues 450-461 are compositionally biased toward polar residues; the sequence is QESLQGKKSSSL. Ser459, Ser460, Ser477, and Ser486 each carry phosphoserine. Thr504 carries the phosphothreonine modification. RCC1 repeat units follow at residues 519–570 and 572–621; these read RTEV…ALTA and SQVY…FLVD. Lys527 is subject to N6-acetyllysine. Positions 684 to 879 constitute a DH domain; sequence GYIASLHELA…ESLALHLGKK (196 aa). Positions 895 to 1001 constitute a PH domain; the sequence is GKMTDSLRKP…RAISQAVDQA (107 aa). MORN repeat units follow at residues 1043–1065, 1066–1088, 1094–1116, 1117–1139, 1145–1167, 1169–1191, 1192–1214, and 1215–1238; these read YDGRWLSGKPHGRGVLKWPDGKV, YSGTFRNGLEDGYGEYRIPNKAL, YVGHWKEGKMCGQGVYSYASGEV, FEGCFQDNMRHGHGLLRSGKLTS, FIGQWVMDKKAGYGVFDDITRGE, YMGMWQDDACQGNGVVVTQFGLY, YEGNFHLNKMMGNGVLLSEDDTI, and YEGEFSDDWTLCGKGTLTMPNGDY. Ser1329 is subject to Phosphoserine. In terms of domain architecture, VPS9 spans 1507–1651; it reads KQPDIALLGF…YYQIQREKLN (145 aa).

As to quaternary structure, forms a heteromeric complex with ALS2CL. Interacts with ALS2CL.

May act as a GTPase regulator. Controls survival and growth of spinal motoneurons. This is Alsin (Als2) from Rattus norvegicus (Rat).